Here is a 336-residue protein sequence, read N- to C-terminus: Fructose-1,6-bisphosphatase class 1 (336 aa).

Positions 92, 115, 117, and 118 each coordinate Mg(2+). Residues 118 to 121, Asn211, Tyr244, 262 to 264, and Lys274 each bind substrate; these read DGSS and YLY. Glu280 is a Mg(2+) binding site.

The protein belongs to the FBPase class 1 family. As to quaternary structure, homotetramer. The cofactor is Mg(2+).

The protein resides in the cytoplasm. The enzyme catalyses beta-D-fructose 1,6-bisphosphate + H2O = beta-D-fructose 6-phosphate + phosphate. Its pathway is carbohydrate biosynthesis; gluconeogenesis. In Aliivibrio salmonicida (strain LFI1238) (Vibrio salmonicida (strain LFI1238)), this protein is Fructose-1,6-bisphosphatase class 1.